The sequence spans 722 residues: Bifunctional UDP-N-acetylglucosamine 2-epimerase/N-acetylmannosamine kinase (722 aa).

Residues R19, S23, R113, H220, and N253 each coordinate UDP. CMP-N-acetyl-beta-neuraminate contacts are provided by K259, E271, K280, and H281. UDP-binding residues include V282, S301, S302, E307, and R321. An N-acetylmannosamine kinase region spans residues 406–722 (TLSALAVDLG…VLDYTTRRIY (317 aa)). Position 413 (D413) interacts with Mg(2+). An N-acyl-D-mannosamine 6-phosphate is bound at residue G416. ADP-binding residues include T417, N418, and R420. Residues G476, R477, T489, N516, D517, and G545 each contribute to the an N-acyl-D-mannosamine 6-phosphate site. An N-acyl-D-mannosamine contacts are provided by G476, R477, T489, N516, and D517. D517 is an active-site residue. The an N-acyl-D-mannosamine site is built by E566 and H569. H569 serves as a coordination point for an N-acyl-D-mannosamine 6-phosphate. Zn(2+) contacts are provided by H569, C579, C581, and C586. Residue E588 coordinates an N-acyl-D-mannosamine 6-phosphate. An an N-acyl-D-mannosamine-binding site is contributed by E588.

In the N-terminal section; belongs to the UDP-N-acetylglucosamine 2-epimerase family. The protein in the C-terminal section; belongs to the ROK (NagC/XylR) family. In terms of assembly, homodimer. Homotetramer. Homohexamer. The hexameric form exhibits both enzyme activities, whereas the dimeric form only catalyzes the phosphorylation of N-acyl-D-mannosamine. Post-translationally, phosphorylated. Phosphorylation by PKC activates the UDP-N-acetylglucosamine 2-epimerase activity. In terms of tissue distribution, highest expression in liver and placenta. Also found in heart, brain, lung, kidney, skeletal muscle and pancreas. Isoform 1 is expressed in heart, brain, kidney, liver, placenta, lung, spleen, pancreas, skeletal muscle and colon. Isoform 2 is expressed mainly in placenta, but also in brain, kidney, liver, lung, pancreas and colon. Isoform 3 is expressed at low level in kidney, liver, placenta and colon.

The protein resides in the cytoplasm. The protein localises to the cytosol. The enzyme catalyses UDP-N-acetyl-alpha-D-glucosamine + H2O = aldehydo-N-acetyl-D-mannosamine + UDP + H(+). The catalysed reaction is an N-acyl-D-mannosamine + ATP = an N-acyl-D-mannosamine 6-phosphate + ADP + H(+). It functions in the pathway amino-sugar metabolism; N-acetylneuraminate biosynthesis. Its activity is regulated as follows. The UDP-N-acetylglucosamine 2-epimerase activity, in contrast to the N-acetylmannosamine kinase activity, exhibits allosteric regulation by cytidine monophosphate-N-acetylneuraminic acid (CMP-Neu5Ac), the end product of neuraminic acid biosynthesis. Moreover, the activity is contingent upon the oligomeric state of the enzyme. The monomeric form is inactive, while the dimeric form selectively catalyzes the phosphorylation of N-acetylmannosamine. The hexameric form, on the other hand, demonstrates full proficiency in both enzyme activities. Furthermore, the UDP-N-acetylglucosamine 2-epimerase activity is increased by PKC-mediated phosphorylation. Its function is as follows. Bifunctional enzyme that possesses both UDP-N-acetylglucosamine 2-epimerase and N-acetylmannosamine kinase activities, and serves as the initiator of the biosynthetic pathway leading to the production of N-acetylneuraminic acid (NeuAc), a critical precursor in the synthesis of sialic acids. By catalyzing this pivotal and rate-limiting step in sialic acid biosynthesis, this enzyme assumes a pivotal role in governing the regulation of cell surface sialylation, playing a role in embryonic angiogenesis. Sialic acids represent a category of negatively charged sugars that reside on the surface of cells as terminal components of glycoconjugates and mediate important functions in various cellular processes, including cell adhesion, signal transduction, and cellular recognition. In Homo sapiens (Human), this protein is Bifunctional UDP-N-acetylglucosamine 2-epimerase/N-acetylmannosamine kinase.